A 109-amino-acid polypeptide reads, in one-letter code: Phycoerythrin alpha-2 subunit (109 aa).

9 residues coordinate (2R,3E)-phycoerythrobilin: Asp-52, Ser-53, Glu-63, Arg-64, Cys-67, Thr-72, Lys-74, Ala-75, and Lys-84.

Belongs to the phycoerythrin family. As to quaternary structure, heterotetramer of 2 different alpha chains and 2 identical beta chains which form 2 alpha-beta heterodimers within the heterotetramer. The two alpha-beta heterodimers are rotated to an open configuration in contrast to the closed configuration found in other cryptophyte species due to the insertion of a single amino acid, Asp-65, in a conserved region of the alpha chain. In the open form, the central chromophores are not in physical contact but are separated by a water-filled channel. Contains three phycoerythrobilin chromophores with binding mediated by both the alpha and beta subunits.

It localises to the plastid. Its subcellular location is the chloroplast thylakoid membrane. Light-harvesting photosynthetic tetrapyrrole chromophore-protein from the phycobiliprotein complex. The chain is Phycoerythrin alpha-2 subunit from Hemiselmis andersenii (Cryptophyte alga).